A 123-amino-acid polypeptide reads, in one-letter code: Sirohydrochlorin cobaltochelatase (123 aa).

The active-site Proton acceptor is the His9. Residue His9 coordinates Co(2+). Residues Glu43 and 68–73 each bind substrate; that span reads FAAGMH. Residue His73 coordinates Co(2+).

Belongs to the CbiX family. CbiXS subfamily. As to quaternary structure, homotetramer; dimer of dimers.

The enzyme catalyses Co-sirohydrochlorin + 2 H(+) = sirohydrochlorin + Co(2+). It functions in the pathway cofactor biosynthesis; adenosylcobalamin biosynthesis; cob(II)yrinate a,c-diamide from sirohydrochlorin (anaerobic route): step 1/10. Its function is as follows. Catalyzes the insertion of Co(2+) into sirohydrochlorin as part of the anaerobic pathway to cobalamin biosynthesis. The chain is Sirohydrochlorin cobaltochelatase from Sulfolobus acidocaldarius (strain ATCC 33909 / DSM 639 / JCM 8929 / NBRC 15157 / NCIMB 11770).